Here is a 398-residue protein sequence, read N- to C-terminus: Carbamoyl phosphate synthase small chain (398 aa).

2 CPSase regions span residues M1 to A205 and M1 to N207. Positions 60, 257, and 259 each coordinate L-glutamine. A Glutamine amidotransferase type-1 domain is found at H209–T397. Catalysis depends on C286, which acts as the Nucleophile. The L-glutamine site is built by L287, Q290, N328, G330, and F331. Residues H370 and E372 contribute to the active site.

The protein belongs to the CarA family. As to quaternary structure, composed of two chains; the small (or glutamine) chain promotes the hydrolysis of glutamine to ammonia, which is used by the large (or ammonia) chain to synthesize carbamoyl phosphate. Tetramer of heterodimers (alpha,beta)4.

The enzyme catalyses hydrogencarbonate + L-glutamine + 2 ATP + H2O = carbamoyl phosphate + L-glutamate + 2 ADP + phosphate + 2 H(+). It catalyses the reaction L-glutamine + H2O = L-glutamate + NH4(+). It participates in amino-acid biosynthesis; L-arginine biosynthesis; carbamoyl phosphate from bicarbonate: step 1/1. The protein operates within pyrimidine metabolism; UMP biosynthesis via de novo pathway; (S)-dihydroorotate from bicarbonate: step 1/3. Functionally, small subunit of the glutamine-dependent carbamoyl phosphate synthetase (CPSase). CPSase catalyzes the formation of carbamoyl phosphate from the ammonia moiety of glutamine, carbonate, and phosphate donated by ATP, constituting the first step of 2 biosynthetic pathways, one leading to arginine and/or urea and the other to pyrimidine nucleotides. The small subunit (glutamine amidotransferase) binds and cleaves glutamine to supply the large subunit with the substrate ammonia. The polypeptide is Carbamoyl phosphate synthase small chain (Bartonella quintana (strain Toulouse) (Rochalimaea quintana)).